Reading from the N-terminus, the 390-residue chain is RNA-binding motif protein, X chromosome (390 aa).

Met1 carries the N-acetylmethionine; in Heterogeneous nuclear ribonucleoprotein G; alternate modification. An N-acetylvaline; in Heterogeneous nuclear ribonucleoprotein G, N-terminally processed modification is found at Val2. The RRM domain maps to 8–86; sequence GKLFIGGLNT…KAIKVEQATK (79 aa). A Glycyl lysine isopeptide (Lys-Gly) (interchain with G-Cter in SUMO2) cross-link involves residue Lys22. Lys30 carries the post-translational modification N6-acetyllysine. A disordered region spans residues 58–390; it reads SPADAKDAAR…RSDRGGRSRY (333 aa). The segment covering 60 to 80 has biased composition (basic and acidic residues); it reads ADAKDAARDMNGKSLDGKAIK. Glycyl lysine isopeptide (Lys-Gly) (interchain with G-Cter in SUMO2) cross-links involve residues Lys80 and Lys86. Phosphoserine is present on residues Ser88 and Ser91. Residues 109–120 are compositionally biased toward gly residues; sequence LRGGRGGSGGTR. Arg125, Arg144, and Arg164 each carry omega-N-methylarginine. Residues 151 to 164 show a composition bias toward pro residues; the sequence is RGPPPRSGGPPPKR. Ser165 bears the Phosphoserine mark. At Arg172 the chain carries Omega-N-methylarginine. Ser174 carries the phosphoserine modification. Basic and acidic residues-rich tracts occupy residues 194–215 and 241–274; these read PRRE…DGYS and YTYR…DYSD. Ser261, Ser329, Ser330, and Ser332 each carry phosphoserine. The segment covering 323-337 has biased composition (low complexity); the sequence is SRDSYTSSRSDLYSS. A compositionally biased stretch (basic and acidic residues) spans 338–347; that stretch reads GRDRVGRQER. Ser352 is modified (phosphoserine). The segment covering 362-371 has biased composition (low complexity); that stretch reads DSYSSSSRGA. Over residues 380–390 the composition is skewed to basic and acidic residues; sequence SRSDRGGRSRY.

In terms of assembly, homomultimer. Found in the supraspliceosome complex Identified in the spliceosome C complex. Interacts with KHDRBS3. Forms a complex with ILF2, ILF3, YLPM1, KHDRBS1, NCOA5 and PPP1CA. Interacts with SAFB/SAFB1. Interacts with ERAP1; the interaction is RNA-independent. Interacts with CLK2, KHDRBS2, SAFB, TRA2B and YTHDC1. Interacts with PPIA/CYPA. In terms of processing, O-glycosylated. Arg-182 is dimethylated, probably to asymmetric dimethylarginine. As to expression, expressed in brain, spleen, lung, liver, kidney, testis and heart. Weakly expressed in skeletal muscle (at protein level).

The protein localises to the nucleus. Functionally, RNA-binding protein that plays several role in the regulation of pre- and post-transcriptional processes. Implicated in tissue-specific regulation of gene transcription and alternative splicing of several pre-mRNAs. Binds to and stimulates transcription from the tumor suppressor TXNIP gene promoter; may thus be involved in tumor suppression. When associated with SAFB, binds to and stimulates transcription from the SREBF1 promoter. Associates with nascent mRNAs transcribed by RNA polymerase II. Component of the supraspliceosome complex that regulates pre-mRNA alternative splice site selection. Can either activate or suppress exon inclusion; acts additively with TRA2B to promote exon 7 inclusion of the survival motor neuron SMN. Represses the splicing of MAPT/Tau exon 10. Binds preferentially to single-stranded 5'-CC[A/C]-rich RNA sequence motifs localized in a single-stranded conformation; probably binds RNA as a homodimer. Binds non-specifically to pre-mRNAs. Also plays a role in the cytoplasmic TNFR1 trafficking pathways; promotes both the IL-1-beta-mediated inducible proteolytic cleavage of TNFR1 ectodomains and the release of TNFR1 exosome-like vesicles to the extracellular compartment. This is RNA-binding motif protein, X chromosome (Rbmx) from Rattus norvegicus (Rat).